A 408-amino-acid chain; its full sequence is Aminomethyltransferase, mitochondrial (408 aa).

A mitochondrion-targeting transit peptide spans 1 to 30; it reads MRGGGLWQLGQSVTRRLAQAEKKVIARRCF. Substrate is bound by residues E235, R266, and Y404.

This sequence belongs to the GcvT family. The glycine cleavage system is composed of four proteins: P, T, L and H.

The protein resides in the mitochondrion. It carries out the reaction N(6)-[(R)-S(8)-aminomethyldihydrolipoyl]-L-lysyl-[protein] + (6S)-5,6,7,8-tetrahydrofolate = N(6)-[(R)-dihydrolipoyl]-L-lysyl-[protein] + (6R)-5,10-methylene-5,6,7,8-tetrahydrofolate + NH4(+). Its function is as follows. The glycine cleavage system catalyzes the degradation of glycine. The sequence is that of Aminomethyltransferase, mitochondrial (GDCST) from Mesembryanthemum crystallinum (Common ice plant).